Consider the following 220-residue polypeptide: ATP phosphoribosyltransferase (220 aa).

This sequence belongs to the ATP phosphoribosyltransferase family. Short subfamily. In terms of assembly, heteromultimer composed of HisG and HisZ subunits.

The protein resides in the cytoplasm. The enzyme catalyses 1-(5-phospho-beta-D-ribosyl)-ATP + diphosphate = 5-phospho-alpha-D-ribose 1-diphosphate + ATP. The protein operates within amino-acid biosynthesis; L-histidine biosynthesis; L-histidine from 5-phospho-alpha-D-ribose 1-diphosphate: step 1/9. Functionally, catalyzes the condensation of ATP and 5-phosphoribose 1-diphosphate to form N'-(5'-phosphoribosyl)-ATP (PR-ATP). Has a crucial role in the pathway because the rate of histidine biosynthesis seems to be controlled primarily by regulation of HisG enzymatic activity. The sequence is that of ATP phosphoribosyltransferase from Janthinobacterium sp. (strain Marseille) (Minibacterium massiliensis).